Here is a 453-residue protein sequence, read N- to C-terminus: Ribosomal protein uS12 methylthiotransferase RimO (453 aa).

The region spanning 5-120 (PKVGFVSLGC…VMQAVHSHLP (116 aa)) is the MTTase N-terminal domain. 6 residues coordinate [4Fe-4S] cluster: cysteine 14, cysteine 50, cysteine 79, cysteine 151, cysteine 155, and cysteine 158. The Radical SAM core domain maps to 137–382 (LTPRHYAYLK…MEVAEEVSAQ (246 aa)). Residues 385 to 453 (QRKVGKTLKV…ADGHDLWGEV (69 aa)) form the TRAM domain.

Belongs to the methylthiotransferase family. RimO subfamily. Requires [4Fe-4S] cluster as cofactor.

The protein localises to the cytoplasm. It catalyses the reaction L-aspartate(89)-[ribosomal protein uS12]-hydrogen + (sulfur carrier)-SH + AH2 + 2 S-adenosyl-L-methionine = 3-methylsulfanyl-L-aspartate(89)-[ribosomal protein uS12]-hydrogen + (sulfur carrier)-H + 5'-deoxyadenosine + L-methionine + A + S-adenosyl-L-homocysteine + 2 H(+). Its function is as follows. Catalyzes the methylthiolation of an aspartic acid residue of ribosomal protein uS12. This is Ribosomal protein uS12 methylthiotransferase RimO from Burkholderia ambifaria (strain ATCC BAA-244 / DSM 16087 / CCUG 44356 / LMG 19182 / AMMD) (Burkholderia cepacia (strain AMMD)).